The sequence spans 319 residues: Annexin A5 (319 aa).

Ala2 is modified (N-acetylalanine). 4 Annexin repeats span residues 13–84 (FDGR…ALMK), 85–156 (PSRL…VLLQ), 168–240 (AQVE…AVVK), and 244–315 (SIPA…LLCG). Lys27 is covalently cross-linked (Glycyl lysine isopeptide (Lys-Gly) (interchain with G-Cter in SUMO1); alternate). A Glycyl lysine isopeptide (Lys-Gly) (interchain with G-Cter in SUMO2); alternate cross-link involves residue Lys27. Ser35 bears the Phosphoserine mark. 5 positions are modified to N6-acetyllysine: Lys68, Lys74, Lys77, Lys95, and Lys99. Lys288 is modified (N6-succinyllysine). Positions 312-318 (LLCGGED) match the [IL]-x-C-x-x-[DE] motif motif.

Belongs to the annexin family. As to quaternary structure, monomer. Binds ATRX, EIF5B and DNMT1. Post-translationally, S-nitrosylation is induced by interferon-gamma and oxidatively-modified low-densitity lipoprotein (LDL(ox)) possibly implicating the iNOS-S100A8/9 transnitrosylase complex.

Its function is as follows. This protein is an anticoagulant protein that acts as an indirect inhibitor of the thromboplastin-specific complex, which is involved in the blood coagulation cascade. In Rattus norvegicus (Rat), this protein is Annexin A5 (Anxa5).